Reading from the N-terminus, the 61-residue chain is Small ribosomal subunit protein uS14B (61 aa).

Zn(2+) contacts are provided by C24, C27, C40, and C43.

This sequence belongs to the universal ribosomal protein uS14 family. Zinc-binding uS14 subfamily. In terms of assembly, part of the 30S ribosomal subunit. Contacts proteins S3 and S10. Requires Zn(2+) as cofactor.

Functionally, binds 16S rRNA, required for the assembly of 30S particles and may also be responsible for determining the conformation of the 16S rRNA at the A site. The protein is Small ribosomal subunit protein uS14B of Lactiplantibacillus plantarum (strain ATCC BAA-793 / NCIMB 8826 / WCFS1) (Lactobacillus plantarum).